Here is a 140-residue protein sequence, read N- to C-terminus: Putative nickel-responsive regulator 2 (140 aa).

Ni(2+)-binding residues include His-81, His-92, His-94, and Cys-100.

Belongs to the transcriptional regulatory CopG/NikR family. It depends on Ni(2+) as a cofactor.

Transcriptional regulator. The protein is Putative nickel-responsive regulator 2 of Methanosarcina mazei (strain ATCC BAA-159 / DSM 3647 / Goe1 / Go1 / JCM 11833 / OCM 88) (Methanosarcina frisia).